The chain runs to 246 residues: Aspartate/glutamate leucyltransferase (246 aa).

The protein belongs to the R-transferase family. Bpt subfamily.

It localises to the cytoplasm. It carries out the reaction N-terminal L-glutamyl-[protein] + L-leucyl-tRNA(Leu) = N-terminal L-leucyl-L-glutamyl-[protein] + tRNA(Leu) + H(+). The enzyme catalyses N-terminal L-aspartyl-[protein] + L-leucyl-tRNA(Leu) = N-terminal L-leucyl-L-aspartyl-[protein] + tRNA(Leu) + H(+). Functions in the N-end rule pathway of protein degradation where it conjugates Leu from its aminoacyl-tRNA to the N-termini of proteins containing an N-terminal aspartate or glutamate. This is Aspartate/glutamate leucyltransferase from Rhodospirillum rubrum (strain ATCC 11170 / ATH 1.1.1 / DSM 467 / LMG 4362 / NCIMB 8255 / S1).